The primary structure comprises 100 residues: Osteocalcin (100 aa).

The N-terminal stretch at 1-23 (MRALTLLALLALAALCITGQAGA) is a signal peptide. A propeptide spanning residues 24–51 (KPSGADSSKGAAFVSKQEGSEVVKRPRR) is cleaved from the precursor. One can recognise a Gla domain in the interval 52 to 98 (YLYQWLGAPVPYPDPLEPKREVCELNPDCDELADHIGFQEAYRRFYG). The Ca(2+) site is built by glutamate 68, glutamate 72, glutamate 75, and aspartate 81. A 4-carboxyglutamate mark is found at glutamate 68, glutamate 72, and glutamate 75. The cysteines at positions 74 and 80 are disulfide-linked.

It belongs to the osteocalcin/matrix Gla protein family. In terms of processing, gamma-carboxyglutamate residues are formed by vitamin K dependent carboxylation by GGCX. These residues are essential for the binding of calcium. Decarboxylation promotes the hormone activity.

The protein resides in the secreted. Functionally, the carboxylated form is one of the main organic components of the bone matrix, which constitutes 1-2% of the total bone protein: it acts as a negative regulator of bone formation and is required to limit bone formation without impairing bone resorption or mineralization. The carboxylated form binds strongly to apatite and calcium. The uncarboxylated form acts as a hormone secreted by osteoblasts, which regulates different cellular processes, such as energy metabolism, male fertility and brain development. Regulates of energy metabolism by acting as a hormone favoring pancreatic beta-cell proliferation, insulin secretion and sensitivity and energy expenditure. Uncarboxylated osteocalcin hormone also promotes testosterone production in the testes: acts as a ligand for G protein-coupled receptor GPRC6A at the surface of Leydig cells, initiating a signaling response that promotes the expression of enzymes required for testosterone synthesis in a CREB-dependent manner. Also acts as a regulator of brain development: osteocalcin hormone crosses the blood-brain barrier and acts as a ligand for GPR158 on neurons, initiating a signaling response that prevents neuronal apoptosis in the hippocampus, favors the synthesis of all monoamine neurotransmitters and inhibits that of gamma-aminobutyric acid (GABA). Osteocalcin also crosses the placenta during pregnancy and maternal osteocalcin is required for fetal brain development. The sequence is that of Osteocalcin from Pongo pygmaeus (Bornean orangutan).